We begin with the raw amino-acid sequence, 864 residues long: Leucine--tRNA ligase (864 aa).

The 'HIGH' region motif lies at 42-52 (PYPSGKLHMGH). The 'KMSKS' region signature appears at 624-628 (KMSKS). Lys627 lines the ATP pocket.

The protein belongs to the class-I aminoacyl-tRNA synthetase family.

Its subcellular location is the cytoplasm. It carries out the reaction tRNA(Leu) + L-leucine + ATP = L-leucyl-tRNA(Leu) + AMP + diphosphate. The sequence is that of Leucine--tRNA ligase from Burkholderia vietnamiensis (strain G4 / LMG 22486) (Burkholderia cepacia (strain R1808)).